The following is a 316-amino-acid chain: Acetaldehyde dehydrogenase 3 (316 aa).

12 to 15 contacts NAD(+); the sequence is SGNI. The active-site Acyl-thioester intermediate is the Cys132. Residues 163 to 171 and Asn289 each bind NAD(+); that span reads SAGPGTRAN.

It belongs to the acetaldehyde dehydrogenase family.

It catalyses the reaction acetaldehyde + NAD(+) + CoA = acetyl-CoA + NADH + H(+). The sequence is that of Acetaldehyde dehydrogenase 3 (mhpF) from Comamonas testosteroni (Pseudomonas testosteroni).